Reading from the N-terminus, the 289-residue chain is Ferri-bacillibactin esterase BesA (289 aa).

Active-site charge relay system residues include Ser163, Glu225, and His263.

It belongs to the esterase D family.

The protein resides in the cytoplasm. Functionally, catalyzes the hydrolysis of the trilactone cycle of ferri-bacillibactin (ferri-BB) complex, leading to the formation of bacillibactin monomers and to cytosolic iron release, thus making iron available for metabolic use. Can also hydrolyze bacillibactin (BB), however the catalytic efficiency for ferri-BB hydrolysis is much higher than for BB. The polypeptide is Ferri-bacillibactin esterase BesA (besA) (Bacillus subtilis (strain 168)).